The primary structure comprises 482 residues: Isoxanthopterin deaminase (482 aa).

Residues H74 and H76 each coordinate Zn(2+). A substrate-binding site is contributed by Q79. H246 is a Zn(2+) binding site. Positions 249 and 283 each coordinate substrate. Zn(2+) is bound by residues H283 and D334.

Belongs to the metallo-dependent hydrolases superfamily. ATZ/TRZ family. Zn(2+) serves as cofactor.

It carries out the reaction a 2-amino-4-hydroxypteridine + H2O + H(+) = a 2,4-dihydroxypteridine + NH4(+). The sequence is that of Isoxanthopterin deaminase from Unknown prokaryotic organism.